The chain runs to 156 residues: Snaclec A5 (156 aa).

The N-terminal stretch at 1 to 23 (MGRSISVSFGLLVVFLSLSGTGA) is a signal peptide. Disulfide bonds link Cys27–Cys38, Cys55–Cys154, and Cys129–Cys146. A C-type lectin domain is found at 34–155 (HEGHCYKVFN…CGKPYRFTCE (122 aa)).

The protein belongs to the snaclec family. As to quaternary structure, heterodimer; disulfide-linked. As to expression, expressed by the venom gland.

It is found in the secreted. Its function is as follows. Interferes with one step of hemostasis (modulation of platelet aggregation, or coagulation cascade, for example). This is Snaclec A5 from Macrovipera lebetinus (Levantine viper).